The sequence spans 1537 residues: Adhesion G protein-coupled receptor L3 (1537 aa).

An N-terminal signal peptide occupies residues 1 to 19; it reads MWPPQLLILTMLLAPVVHG. Over 20–943 the chain is Extracellular; that stretch reads GKHNERHPAL…VKHSDAVHDL (924 aa). The disordered stretch occupies residues 53-80; the sequence is PAAERSTAHRGQGPRGAARGVRGPGAPG. The 90-residue stretch at 103–192 folds into the SUEL-type lectin domain; that stretch reads SCESYPIELR…KYLEVQYECV (90 aa). 5 cysteine pairs are disulfide-bonded: cysteine 104–cysteine 134, cysteine 113–cysteine 191, cysteine 146–cysteine 178, cysteine 159–cysteine 165, and cysteine 203–cysteine 385. An N-linked (GlcNAc...) asparagine glycan is attached at asparagine 161. The region spanning 202–461 is the Olfactomedin-like domain; sequence LCPGLLKGVY…VVKYSLDFGP (260 aa). An interaction with FLRT3 region spans residues 317 to 347; it reads YHDTSPYRWGGKSDIDLAVDENGLWVIYATE. Ca(2+) is bound by residues aspartate 332, asparagine 380, alanine 381, and valine 435. Positions 521–540 are disordered; it reads RSTTASLPGRRNRSTSTPSP. Asparagine 532, asparagine 617, asparagine 827, asparagine 840, asparagine 885, and asparagine 911 each carry an N-linked (GlcNAc...) asparagine glycan. The GAIN-B domain maps to 756–935; sequence DIVRENTDNI…AVLMAHVEVK (180 aa). Cystine bridges form between cysteine 886–cysteine 917 and cysteine 905–cysteine 919. The tract at residues 886–935 is GPS; it reads CSFWSYSKRTMTGYWSTQGCRLLTTNKTHTTCSCNHLTNFAVLMAHVEVK. A stachel region spans residues 923–939; sequence TNFAVLMAHVEVKHSDA. The chain crosses the membrane as a helical span at residues 944 to 969; sequence LLDVITWVGILLSLVCLLICIFTFCF. At 970–975 the chain is on the cytoplasmic side; it reads FRGLQS. A helical transmembrane segment spans residues 976–999; it reads DRNTIHKNLCISLFVAELLFLIGI. Asparagine 1000 carries N-linked (GlcNAc...) asparagine glycosylation. Over 1000–1006 the chain is Extracellular; it reads NRTDQPI. A helical transmembrane segment spans residues 1007-1034; that stretch reads ACAVFAALLHFFFLAAFTWMFLEGVQLY. A disulfide bridge links cysteine 1008 with cysteine 1080. Residues 1035–1048 are Cytoplasmic-facing; sequence IMLVEVFESEHSRR. Residues 1049-1071 form a helical membrane-spanning segment; it reads KYFYLVGYGMPALIVAVSAAVDY. Residues 1072-1086 lie on the Extracellular side of the membrane; sequence RSYGTDKVCWLRLDT. Residues 1087-1112 form a helical membrane-spanning segment; the sequence is YFIWSFIGPATLIIMLNVIFLGIALY. At 1113–1142 the chain is on the cytoplasmic side; the sequence is KMFHHTAILKPESGCLDNINYEDNRPFIKS. Residues 1143 to 1163 form a helical membrane-spanning segment; sequence WVIGAIALLCLLGLTWAFGLM. Topologically, residues 1164–1168 are extracellular; it reads YINES. N-linked (GlcNAc...) asparagine glycosylation is present at asparagine 1166. Residues 1169–1195 form a helical membrane-spanning segment; it reads TVIMAYLFTIFNSLQGMFIFIFHCVLQ. Residues 1196–1537 lie on the Cytoplasmic side of the membrane; that stretch reads KKVRKEYGKC…KGPAHLVTSL (342 aa). Positions 1213–1237 are disordered; it reads GKSTESSIGSGKTSGSRTPGRYSTG. 2 positions are modified to phosphoserine: serine 1254 and serine 1522. The tract at residues 1512 to 1537 is disordered; it reads FIVPPNKDGASPEGTSKGPAHLVTSL. The PDZ-binding motif lies at 1532-1537; it reads HLVTSL.

Belongs to the G-protein coupled receptor 2 family. LN-TM7 subfamily. As to quaternary structure, heterodimer of 2 chains generated by proteolytic processing; the large extracellular N-terminal fragment and the membrane-bound C-terminal fragment predominantly remain associated and non-covalently linked. Interacts (via olfactomedin-like domain) with FLRT1 (via extracellular domain). Interacts (via olfactomedin-like domain) with FLRT2 (via extracellular domain). Interacts (via olfactomedin-like domain) with FLRT3 (via extracellular domain); the interaction is direct. Interacts (via extracellular domain) with TENM1. Interacts (via extracellular domain) with TENM2. Interacts (via extracellular domain) with TENM3. Identified in a complex with FLRT3 and UNC5B; does not interact with UNC5B by itself. Identified in a complex with FLRT3 and UNC5D; does not interact with UNC5D by itself. Interacts (via PDZ-binding motif) with SHANK3. Interacts (via PDZ-binding motif) with DLG4. In terms of processing, autoproteolytically processed at the GPS region of the GAIN-B domain; this cleavage modulates receptor activity. Post-translationally, O-glycosylated (major) and N-glycosylated. In terms of tissue distribution, localizes to postsynaptic spines in non-overlapping dendritic domains of CA1-region pyramidal neurons: specifically localizes to excitatory synapses in the S.oriens and S.radiatum, corresponding to distinct presynaptic inputs onto CA1-region pyramidal neurons.

The protein localises to the cell membrane. It localises to the postsynaptic cell membrane. Its subcellular location is the cell projection. It is found in the axon. The protein resides in the cell junction. With respect to regulation, forms a heterodimer of 2 chains generated by proteolytic processing that remain associated through non-covalent interactions mediated by the GAIN-B domain. In the inactivated receptor, the Stachel sequence (also named stalk) is embedded in the GAIN-B domain, where it adopts a beta-strand conformation. On activation, the Stachel moves into the 7 transmembrane region and adopts a twisted hook-shaped configuration that forms contacts within the receptor, leading to coupling of a G-alpha protein, which activates signaling. The cleaved GAIN-B and N-terminal domains can then dissociate from the rest of the receptor. Its function is as follows. Orphan adhesion G-protein coupled receptor (aGPCR), which mediates synapse specificity. Ligand binding causes a conformation change that triggers signaling via guanine nucleotide-binding proteins (G proteins) and modulates the activity of downstream effectors. ADGRL3 is coupled with different classes of G alpha proteins, such as G(12)/G(13), G(s), G(i) or G(q), depending on the context. Coupling to G(12)/G(13) G proteins, which mediates the activation Rho small GTPases is the most efficient. Following G-protein coupled receptor activation, associates with cell adhesion molecules that are expressed at the surface of adjacent cells to direct synapse specificity. Specifically mediates the establishment of Schaffer-collateral synapses formed by CA3-region axons on CA1-region pyramidal neurons in the hippocampus. Localizes to postsynaptic spines in excitatory synapses in the S.oriens and S.radiatum and interacts with presynaptic cell adhesion molecules FLRT3 and TENM2, promoting synapse formation. Plays a role in the development of glutamatergic synapses in the cortex. Important in determining the connectivity rates between the principal neurons in the cortex. Orphan adhesion G-protein coupled receptor (aGPCR), which mediates synapse specificity. Ligand binding causes a conformation change that triggers signaling via guanine nucleotide-binding proteins (G proteins) and modulates the activity of downstream effectors, such as adenylate cyclase. Isoform 1 is specifically coupled to G(s) G proteins and mediates activation of adenylate cyclase activity. Following G-protein coupled receptor activation, undergoes liquid-liquid phase transition, associates with (1) cell adhesion molecules that are expressed at the surface of adjacent cells, as well as (2) PDZ-containing proteins, such as SHANK3 and DLG4, in the cytoplasm to direct synapse formation. Functionally, orphan adhesion G-protein coupled receptor (aGPCR). Ligand binding causes a conformation change that triggers signaling via guanine nucleotide-binding proteins (G proteins) and modulates the activity of downstream effectors, such as RhoA pathway. Isoform 7 is coupled to G(12) and/or G(13) G proteins (GNA12 and GNA13, respectively) and mediates the activation Rho small GTPases. The polypeptide is Adhesion G protein-coupled receptor L3 (Mus musculus (Mouse)).